Here is a 475-residue protein sequence, read N- to C-terminus: Crocetin glucosyltransferase 3 (475 aa).

Residue His-16 is the Proton acceptor of the active site. His-16 contributes to the an anthocyanidin binding site. Catalysis depends on Asp-123, which acts as the Charge relay. Residues Thr-144, Ala-354, Gln-356, His-371, Trp-374, Asn-375, Ser-376, and Glu-379 each coordinate UDP-alpha-D-glucose. Ala-394 provides a ligand contact to an anthocyanidin. The UDP-alpha-D-glucose site is built by Glu-395 and Gln-396.

The protein belongs to the UDP-glycosyltransferase family. As to expression, mainly expressed in stamens.

The enzyme catalyses crocetin + UDP-alpha-D-glucose = beta-D-glucosyl crocetin + UDP. The catalysed reaction is beta-D-glucosyl crocetin + UDP-alpha-D-glucose = bis(beta-D-glucosyl) crocetin + UDP. It catalyses the reaction beta-D-gentiobiosyl crocetin + UDP-alpha-D-glucose = beta-D-gentiobiosyl beta-D-glucosyl crocetin + UDP. Functionally, crocetin glucosyltransferase involved in the synthesis of crocin, one of the apocarotenoids responsible for the color and bitter taste of saffron. The chain is Crocetin glucosyltransferase 3 (GLT3) from Crocus sativus (Saffron).